Here is a 214-residue protein sequence, read N- to C-terminus: tRNA (guanine-N(7)-)-methyltransferase (214 aa).

4 residues coordinate S-adenosyl-L-methionine: E43, E68, D95, and D117. D117 is a catalytic residue. Substrate is bound by residues K121, D153, and 190–193; that span reads TEYE.

The protein belongs to the class I-like SAM-binding methyltransferase superfamily. TrmB family.

The catalysed reaction is guanosine(46) in tRNA + S-adenosyl-L-methionine = N(7)-methylguanosine(46) in tRNA + S-adenosyl-L-homocysteine. Its pathway is tRNA modification; N(7)-methylguanine-tRNA biosynthesis. Catalyzes the formation of N(7)-methylguanine at position 46 (m7G46) in tRNA. The polypeptide is tRNA (guanine-N(7)-)-methyltransferase (Staphylococcus aureus (strain MSSA476)).